The following is a 427-amino-acid chain: Phosphoribosylamine--glycine ligase (427 aa).

The region spanning 110–315 (KDFCQRHGLP…IVPILLAAAK (206 aa)) is the ATP-grasp domain. 136–196 (LDTLEAPFVI…EEFMHGEEAS (61 aa)) contributes to the ATP binding site. Positions 285 and 287 each coordinate Mg(2+).

It belongs to the GARS family. The cofactor is Mg(2+). Mn(2+) serves as cofactor.

It catalyses the reaction 5-phospho-beta-D-ribosylamine + glycine + ATP = N(1)-(5-phospho-beta-D-ribosyl)glycinamide + ADP + phosphate + H(+). The protein operates within purine metabolism; IMP biosynthesis via de novo pathway; N(1)-(5-phospho-D-ribosyl)glycinamide from 5-phospho-alpha-D-ribose 1-diphosphate: step 2/2. This is Phosphoribosylamine--glycine ligase from Caulobacter vibrioides (strain ATCC 19089 / CIP 103742 / CB 15) (Caulobacter crescentus).